Reading from the N-terminus, the 348-residue chain is Dihydroorotase (348 aa).

Residues H17 and H19 each contribute to the Zn(2+) site. Substrate contacts are provided by residues 19–21 (HLR) and N45. Residues K103, H140, and H178 each contribute to the Zn(2+) site. Residue K103 is modified to N6-carboxylysine. H140 contacts substrate. L223 is a binding site for substrate. D251 contacts Zn(2+). D251 is a catalytic residue. Residues H255 and A267 each coordinate substrate.

The protein belongs to the metallo-dependent hydrolases superfamily. DHOase family. Class II DHOase subfamily. Homodimer. Requires Zn(2+) as cofactor.

It carries out the reaction (S)-dihydroorotate + H2O = N-carbamoyl-L-aspartate + H(+). Its pathway is pyrimidine metabolism; UMP biosynthesis via de novo pathway; (S)-dihydroorotate from bicarbonate: step 3/3. In terms of biological role, catalyzes the reversible cyclization of carbamoyl aspartate to dihydroorotate. This chain is Dihydroorotase, found in Shigella boydii serotype 4 (strain Sb227).